Consider the following 244-residue polypeptide: 5-oxoprolinase subunit A (244 aa).

It belongs to the LamB/PxpA family. As to quaternary structure, forms a complex composed of PxpA, PxpB and PxpC.

The catalysed reaction is 5-oxo-L-proline + ATP + 2 H2O = L-glutamate + ADP + phosphate + H(+). Its function is as follows. Catalyzes the cleavage of 5-oxoproline to form L-glutamate coupled to the hydrolysis of ATP to ADP and inorganic phosphate. The protein is 5-oxoprolinase subunit A of Citrobacter koseri (strain ATCC BAA-895 / CDC 4225-83 / SGSC4696).